The primary structure comprises 541 residues: Arginine--tRNA ligase (541 aa).

A 'HIGH' region motif is present at residues 119 to 129 (ANPTGPLHIGH).

The protein belongs to the class-I aminoacyl-tRNA synthetase family. As to quaternary structure, monomer.

Its subcellular location is the cytoplasm. The catalysed reaction is tRNA(Arg) + L-arginine + ATP = L-arginyl-tRNA(Arg) + AMP + diphosphate. In Helicobacter pylori (strain HPAG1), this protein is Arginine--tRNA ligase.